We begin with the raw amino-acid sequence, 232 residues long: E3 ubiquitin-protein ligase RNF125 (232 aa).

A compositionally biased stretch (polar residues) spans 1 to 10 (MGSVLSTDSG). Residues 1–23 (MGSVLSTDSGKSAPASATARALE) are disordered. Residue Gly2 is the site of N-myristoyl glycine attachment. Residues Cys37 and Cys40 each contribute to the Zn(2+) site. Residues 37–76 (CAVCLEVLHQPVRTRCGHVFCRSCIATSLKNNKWTCPYCR) form an RING-type zinc finger. The segment at 43-45 (VLH) is interaction with the C2HC RNF-type zinc finger. Residues Cys52, His54, Cys57, Cys60, Cys72, Cys75, Cys100, and Cys103 each contribute to the Zn(2+) site. The C2HC RNF-type zinc-finger motif lies at 100–119 (CAECDTLVCLSEMRAHIRTC). The tract at residues 109-113 (LSEMR) is interaction with the RING-type zinc finger. His115 and Cys119 together coordinate Zn(2+). Residues 120 to 128 (QKYIDKYGP) are linker region. The segment at 210 to 224 (EEALIRRVLDRSLLE) is required for interaction with ubiquitin and for autoubiquitination.

In terms of assembly, interacts with UBE2D1. Interacts with VCP/p97; leading to recruit RNF125 to RIGI and promote ubiquitination of RIGI. In terms of processing, autoubiquitinated, leading to its subsequent proteasomal degradation. Predominantly expressed in lymphoid tissues, including bone marrow, spleen and thymus. Also weakly expressed in other tissues. Predominant in the CD4(+) and CD8(+) T-cells, suggesting that it is preferentially confined to T-cells.

Its subcellular location is the golgi apparatus membrane. It catalyses the reaction S-ubiquitinyl-[E2 ubiquitin-conjugating enzyme]-L-cysteine + [acceptor protein]-L-lysine = [E2 ubiquitin-conjugating enzyme]-L-cysteine + N(6)-ubiquitinyl-[acceptor protein]-L-lysine.. It participates in protein modification; protein ubiquitination. Functionally, E3 ubiquitin-protein ligase that mediates ubiquitination and subsequent proteasomal degradation of target proteins, such as RIGI, MAVS/IPS1, IFIH1/MDA5, JAK1 and p53/TP53. Acts as a negative regulator of type I interferon production by mediating ubiquitination of RIGI at 'Lys-181', leading to RIGI degradation. Mediates ubiquitination and subsequent degradation of p53/TP53. Mediates ubiquitination and subsequent degradation of JAK1. Acts as a positive regulator of T-cell activation. In Homo sapiens (Human), this protein is E3 ubiquitin-protein ligase RNF125.